Consider the following 401-residue polypeptide: Nicotinate phosphoribosyltransferase (401 aa).

H221 is modified (phosphohistidine; by autocatalysis).

The protein belongs to the NAPRTase family. In terms of processing, transiently phosphorylated on a His residue during the reaction cycle. Phosphorylation strongly increases the affinity for substrates and increases the rate of nicotinate D-ribonucleotide production. Dephosphorylation regenerates the low-affinity form of the enzyme, leading to product release.

The enzyme catalyses nicotinate + 5-phospho-alpha-D-ribose 1-diphosphate + ATP + H2O = nicotinate beta-D-ribonucleotide + ADP + phosphate + diphosphate. The protein operates within cofactor biosynthesis; NAD(+) biosynthesis; nicotinate D-ribonucleotide from nicotinate: step 1/1. Functionally, catalyzes the synthesis of beta-nicotinate D-ribonucleotide from nicotinate and 5-phospho-D-ribose 1-phosphate at the expense of ATP. This Yersinia enterocolitica serotype O:8 / biotype 1B (strain NCTC 13174 / 8081) protein is Nicotinate phosphoribosyltransferase.